The following is a 398-amino-acid chain: Enoyl-[acyl-carrier-protein] reductase [NADH] (398 aa).

Residues 48 to 53 (GASTGY), 74 to 75 (FE), 111 to 112 (DA), and 139 to 140 (LA) each bind NAD(+). A substrate-binding site is contributed by tyrosine 225. The active-site Proton donor is the tyrosine 235. Residues lysine 244 and 273-275 (VVT) each bind NAD(+).

The protein belongs to the TER reductase family. Monomer.

The enzyme catalyses a 2,3-saturated acyl-[ACP] + NAD(+) = a (2E)-enoyl-[ACP] + NADH + H(+). It functions in the pathway lipid metabolism; fatty acid biosynthesis. Functionally, involved in the final reduction of the elongation cycle of fatty acid synthesis (FAS II). Catalyzes the reduction of a carbon-carbon double bond in an enoyl moiety that is covalently linked to an acyl carrier protein (ACP). The chain is Enoyl-[acyl-carrier-protein] reductase [NADH] from Paraburkholderia phytofirmans (strain DSM 17436 / LMG 22146 / PsJN) (Burkholderia phytofirmans).